Consider the following 49-residue polypeptide: uncharacterized protein (49 aa).

This sequence belongs to the metallo-dependent hydrolases superfamily. TatD-type hydrolase family. A divalent metal cation serves as cofactor.

This is an uncharacterized protein from Geobacillus stearothermophilus (Bacillus stearothermophilus).